The sequence spans 311 residues: Protoheme IX farnesyltransferase (311 aa).

9 helical membrane passes run 32-52 (VMSL…VSIN), 53-73 (PWYG…AGVL), 104-124 (FVFG…FINW), 125-145 (FAAL…TIWL), 153-173 (IVIG…AATG), 180-200 (FLLF…LSLF), 224-244 (KQIL…FIID), 245-265 (FAGI…IYFA), and 290-310 (FYLA…YFII).

The protein belongs to the UbiA prenyltransferase family. Protoheme IX farnesyltransferase subfamily.

Its subcellular location is the cell inner membrane. The enzyme catalyses heme b + (2E,6E)-farnesyl diphosphate + H2O = Fe(II)-heme o + diphosphate. Its pathway is porphyrin-containing compound metabolism; heme O biosynthesis; heme O from protoheme: step 1/1. Its function is as follows. Converts heme B (protoheme IX) to heme O by substitution of the vinyl group on carbon 2 of heme B porphyrin ring with a hydroxyethyl farnesyl side group. This Bartonella quintana (strain Toulouse) (Rochalimaea quintana) protein is Protoheme IX farnesyltransferase.